Reading from the N-terminus, the 492-residue chain is G2/mitotic-specific cyclin CYB1 (492 aa).

The tract at residues 1-176 is disordered; it reads MPQVTKTNNE…QPEVGERSQS (176 aa). Positions 23–33 are enriched in polar residues; that stretch reads QESISTIKNTT. Residues 34 to 58 show a composition bias toward low complexity; the sequence is ISNSQHKQQTQQQISSPPQVSVTSS. The span at 59 to 83 shows a compositional bias: polar residues; the sequence is EGVSHVNTRQYLGDVSNQYITNAKP. Over residues 111–135 the composition is skewed to low complexity; the sequence is ASDNNNNGSTSSSSNSSNNNNNDAN.

The protein belongs to the cyclin family. Cyclin AB subfamily.

Functionally, essential for the control of the cell cycle at the G2/M (mitosis) transition. Interacts with the CDC2 protein kinase to form MPF. G2/M cyclins accumulate steadily during G2 and are abruptly destroyed at mitosis. This Candida albicans (Yeast) protein is G2/mitotic-specific cyclin CYB1 (CYB1).